A 525-amino-acid polypeptide reads, in one-letter code: BTB/POZ domain-containing protein 2 (525 aa).

The segment at 1–86 is disordered; the sequence is MAAGGSGGRA…AEEAAGPGAA (86 aa). The segment covering 16 to 26 has biased composition (gly residues); sequence VGVGPGTGGSP. Low complexity predominate over residues 27-55; sequence GPSANAAATPAPGNAAAAAAAAAAAAAAP. Over residues 56–65 the composition is skewed to pro residues; sequence GPTPPAPPGP. The span at 66 to 86 shows a compositional bias: low complexity; that stretch reads GTDAQAAGAERAEEAAGPGAA. One can recognise a BTB domain in the interval 117–187; the sequence is CDVHFLVGKG…LYSDEVQIGP (71 aa).

As to quaternary structure, interacts with topoisomerase 1 and with TRIM5 isoform Delta.

It localises to the cytoplasm. The sequence is that of BTB/POZ domain-containing protein 2 (BTBD2) from Homo sapiens (Human).